We begin with the raw amino-acid sequence, 566 residues long: E3 ubiquitin-protein ligase RNF220 (566 aa).

Lysine 277 participates in a covalent cross-link: Glycyl lysine isopeptide (Lys-Gly) (interchain with G-Cter in SUMO2). The tract at residues 277–297 (KREGESPTASPHSSATDDLHH) is disordered. Serine 390 carries the post-translational modification Phosphoserine. A coiled-coil region spans residues 485 to 513 (EDSAVTTFEALKARVRELERQLSRGDRYK). The tract at residues 514-522 (CLICMDSYS) is required for targeting to the cytoplasm. Residues 514-553 (CLICMDSYSMPLTSIQCWHVHCEECWLRTLGAKKLCPQCN) form an RING-type zinc finger.

In terms of assembly, interacts with SIN3B. Interacts with CTNNB1 (via Armadillo repeats 2-8). Interacts with USP7 (via MATH domain). Auto-ubiquitinated; leads to proteasomal degradation.

Its subcellular location is the cytoplasm. The protein localises to the nucleus. It catalyses the reaction S-ubiquitinyl-[E2 ubiquitin-conjugating enzyme]-L-cysteine + [acceptor protein]-L-lysine = [E2 ubiquitin-conjugating enzyme]-L-cysteine + N(6)-ubiquitinyl-[acceptor protein]-L-lysine.. It functions in the pathway protein modification; protein ubiquitination. Its function is as follows. E3 ubiquitin-protein ligase that promotes the ubiquitination and proteasomal degradation of SIN3B. Independently of its E3 ligase activity, acts as a CTNNB1 stabilizer through USP7-mediated deubiquitination of CTNNB1 and promotes Wnt signaling. Plays a critical role in the regulation of nuclear lamina. The sequence is that of E3 ubiquitin-protein ligase RNF220 (RNF220) from Macaca fascicularis (Crab-eating macaque).